Consider the following 205-residue polypeptide: Ras-related protein Rab-18-B (205 aa).

Serine 17, glycine 20, lysine 21, serine 22, serine 23, aspartate 34, proline 35, threonine 40, glycine 66, lysine 123, aspartate 125, and alanine 152 together coordinate GTP. Serine 22 contacts Mg(2+). 2 consecutive short sequence motifs (switch) follow at residues 31–45 (DTFDPELAATIGVDF) and 63–80 (DTAGQERFRTLTPSYYRG). Threonine 40 lines the Mg(2+) pocket. The S-palmitoyl cysteine moiety is linked to residue cysteine 198. Cysteine 202 is subject to Cysteine methyl ester. Cysteine 202 carries S-geranylgeranyl cysteine lipidation. A propeptide spans 203-205 (SLV) (removed in mature form).

Belongs to the small GTPase superfamily. Rab family. Mg(2+) serves as cofactor.

The protein localises to the endoplasmic reticulum membrane. The protein resides in the golgi apparatus. It localises to the cis-Golgi network membrane. It is found in the lipid droplet. Its subcellular location is the apical cell membrane. The catalysed reaction is GTP + H2O = GDP + phosphate + H(+). With respect to regulation, regulated by guanine nucleotide exchange factors (GEFs) which promote the exchange of bound GDP for free GTP. Regulated by GTPase activating proteins (GAPs) which increase the GTP hydrolysis activity at the ER membrane. Inhibited by GDP dissociation inhibitors (GDIs) which prevent Rab-GDP dissociation. Its function is as follows. The small GTPases Rab are key regulators of intracellular membrane trafficking, from the formation of transport vesicles to their fusion with membranes. Rabs cycle between an inactive GDP-bound form and an active GTP-bound form that is able to recruit to membranes different sets of downstream effectors directly responsible for vesicle formation, movement, tethering and fusion. Required for the localization of ZFYVE1 to lipid droplets and for its function in mediating the formation of endoplasmic reticulum-lipid droplets (ER-LD) contacts. Also required for maintaining endoplasmic reticulum structure. Plays a role in apical endocytosis/recycling. Plays a key role in eye and brain development and neurodegeneration. This is Ras-related protein Rab-18-B (rab18b) from Danio rerio (Zebrafish).